The primary structure comprises 633 residues: Mitochondrial Rho GTPase 1 (633 aa).

Positions 1 to 170 (MATVRICVCG…FFLCQKAVTH (170 aa)) constitute a Miro 1 domain. Residues 1–603 (MATVRICVCG…PRSEEDVEGK (603 aa)) lie on the Cytoplasmic side of the membrane. GTP is bound by residues 10-17 (GDEGTGKS), 59-63 (DTSAL), and 115-118 (NKSD). EF-hand domains follow at residues 186-221 (AAVA…CFEK) and 306-341 (EGYR…TPGL). Ca(2+) contacts are provided by aspartate 199, aspartate 201, aspartate 203, tyrosine 205, glutamate 210, aspartate 319, aspartate 321, aspartate 323, and glutamate 330. The tract at residues 398–418 (NPSTTAALKVTRPRKRRKRPG) is disordered. A compositionally biased stretch (basic residues) spans 408–418 (TRPRKRRKRPG). A Miro 2 domain is found at 422-588 (RNVVLGHVLG…FVHIAEAAME (167 aa)). GTP contacts are provided by residues 431-438 (GPPGSGKS), 467-471 (ELPGG), and 537-540 (LKAD). Residues 604–624 (WMAWGIALGAVVCAGAAAVMI) traverse the membrane as a helical; Anchor for type IV membrane protein segment. Topologically, residues 625 to 633 (WRRVSGSGT) are mitochondrial intermembrane.

It belongs to the mitochondrial Rho GTPase family.

It localises to the mitochondrion outer membrane. Functionally, mitochondrial GTPase involved in mitochondrial trafficking. Probably involved in control of anterograde transport of mitochondria and their subcellular distribution. The sequence is that of Mitochondrial Rho GTPase 1 (gem1) from Aspergillus oryzae (strain ATCC 42149 / RIB 40) (Yellow koji mold).